Consider the following 97-residue polypeptide: U6-theraphotoxin-Hhn1a 2 (97 aa).

Positions Met-1–Ala-33 are cleaved as a signal peptide. Residues Ser-34–Arg-61 constitute a propeptide that is removed on maturation. 3 disulfide bridges follow: Cys-63-Cys-77, Cys-70-Cys-82, and Cys-76-Cys-89.

It belongs to the neurotoxin 10 (Hwtx-1) family. 12 (Hntx-12) subfamily. In terms of tissue distribution, expressed by the venom gland.

The protein localises to the secreted. Its function is as follows. Ion channel inhibitor. The chain is U6-theraphotoxin-Hhn1a 2 from Cyriopagopus hainanus (Chinese bird spider).